Here is a 503-residue protein sequence, read N- to C-terminus: ATP synthase subunit alpha (503 aa).

169–176 (GDRGTGKT) provides a ligand contact to ATP.

This sequence belongs to the ATPase alpha/beta chains family. F-type ATPases have 2 components, CF(1) - the catalytic core - and CF(0) - the membrane proton channel. CF(1) has five subunits: alpha(3), beta(3), gamma(1), delta(1), epsilon(1). CF(0) has three main subunits: a(1), b(2) and c(9-12). The alpha and beta chains form an alternating ring which encloses part of the gamma chain. CF(1) is attached to CF(0) by a central stalk formed by the gamma and epsilon chains, while a peripheral stalk is formed by the delta and b chains.

It is found in the cell inner membrane. The enzyme catalyses ATP + H2O + 4 H(+)(in) = ADP + phosphate + 5 H(+)(out). Its function is as follows. Produces ATP from ADP in the presence of a proton gradient across the membrane. The alpha chain is a regulatory subunit. This Leptospira borgpetersenii serovar Hardjo-bovis (strain L550) protein is ATP synthase subunit alpha.